Consider the following 476-residue polypeptide: Cardiolipin synthase (476 aa).

2 helical membrane passes run 2–22 (HLFINMIFLINIVFIISIIFI) and 31–51 (WAWILILTFLPILGFIIYILF). PLD phosphodiesterase domains follow at residues 207-234 (INYRNHRKILIIDSKVAFLGGFNIGDEY) and 389-416 (EKGFLHAKTIVADSSICSVGTANMDIRS). Residues His212, Lys214, Asp219, His394, Lys396, and Asp401 contribute to the active site.

Belongs to the phospholipase D family. Cardiolipin synthase subfamily.

Its subcellular location is the cell membrane. The enzyme catalyses 2 a 1,2-diacyl-sn-glycero-3-phospho-(1'-sn-glycerol) = a cardiolipin + glycerol. Catalyzes the reversible phosphatidyl group transfer from one phosphatidylglycerol molecule to another to form cardiolipin (CL) (diphosphatidylglycerol) and glycerol. The polypeptide is Cardiolipin synthase (cls) (Clostridium perfringens (strain 13 / Type A)).